Consider the following 377-residue polypeptide: UDP-N-acetylglucosamine--N-acetylmuramyl-(pentapeptide) pyrophosphoryl-undecaprenol N-acetylglucosamine transferase (377 aa).

UDP-N-acetyl-alpha-D-glucosamine contacts are provided by residues 29-31 (TAG), N142, R179, S213, and Q308.

It belongs to the glycosyltransferase 28 family. MurG subfamily.

The protein resides in the cell membrane. It catalyses the reaction di-trans,octa-cis-undecaprenyl diphospho-N-acetyl-alpha-D-muramoyl-L-alanyl-D-glutamyl-meso-2,6-diaminopimeloyl-D-alanyl-D-alanine + UDP-N-acetyl-alpha-D-glucosamine = di-trans,octa-cis-undecaprenyl diphospho-[N-acetyl-alpha-D-glucosaminyl-(1-&gt;4)]-N-acetyl-alpha-D-muramoyl-L-alanyl-D-glutamyl-meso-2,6-diaminopimeloyl-D-alanyl-D-alanine + UDP + H(+). The protein operates within cell wall biogenesis; peptidoglycan biosynthesis. Functionally, cell wall formation. Catalyzes the transfer of a GlcNAc subunit on undecaprenyl-pyrophosphoryl-MurNAc-pentapeptide (lipid intermediate I) to form undecaprenyl-pyrophosphoryl-MurNAc-(pentapeptide)GlcNAc (lipid intermediate II). In Saccharopolyspora erythraea (strain ATCC 11635 / DSM 40517 / JCM 4748 / NBRC 13426 / NCIMB 8594 / NRRL 2338), this protein is UDP-N-acetylglucosamine--N-acetylmuramyl-(pentapeptide) pyrophosphoryl-undecaprenol N-acetylglucosamine transferase.